Here is a 472-residue protein sequence, read N- to C-terminus: 3-isopropylmalate dehydratase large subunit (472 aa).

[4Fe-4S] cluster-binding residues include Cys346, Cys406, and Cys409.

The protein belongs to the aconitase/IPM isomerase family. LeuC type 1 subfamily. As to quaternary structure, heterodimer of LeuC and LeuD. [4Fe-4S] cluster is required as a cofactor.

It carries out the reaction (2R,3S)-3-isopropylmalate = (2S)-2-isopropylmalate. Its pathway is amino-acid biosynthesis; L-leucine biosynthesis; L-leucine from 3-methyl-2-oxobutanoate: step 2/4. Its function is as follows. Catalyzes the isomerization between 2-isopropylmalate and 3-isopropylmalate, via the formation of 2-isopropylmaleate. This Thermus thermophilus (strain ATCC BAA-163 / DSM 7039 / HB27) protein is 3-isopropylmalate dehydratase large subunit.